We begin with the raw amino-acid sequence, 294 residues long: tRNA pseudouridine synthase B (294 aa).

Aspartate 39 acts as the Nucleophile in catalysis.

Belongs to the pseudouridine synthase TruB family. Type 1 subfamily.

The catalysed reaction is uridine(55) in tRNA = pseudouridine(55) in tRNA. Responsible for synthesis of pseudouridine from uracil-55 in the psi GC loop of transfer RNAs. The protein is tRNA pseudouridine synthase B of Streptococcus pyogenes serotype M28 (strain MGAS6180).